Here is a 197-residue protein sequence, read N- to C-terminus: Nucleoside triphosphate pyrophosphatase (197 aa).

Asp72 functions as the Proton acceptor in the catalytic mechanism.

Belongs to the Maf family. Requires a divalent metal cation as cofactor.

The protein localises to the cytoplasm. It catalyses the reaction a ribonucleoside 5'-triphosphate + H2O = a ribonucleoside 5'-phosphate + diphosphate + H(+). The catalysed reaction is a 2'-deoxyribonucleoside 5'-triphosphate + H2O = a 2'-deoxyribonucleoside 5'-phosphate + diphosphate + H(+). Nucleoside triphosphate pyrophosphatase. May have a dual role in cell division arrest and in preventing the incorporation of modified nucleotides into cellular nucleic acids. The sequence is that of Nucleoside triphosphate pyrophosphatase from Corynebacterium glutamicum (strain R).